Reading from the N-terminus, the 82-residue chain is Small ribosomal subunit protein bS18 (82 aa).

The protein belongs to the bacterial ribosomal protein bS18 family. As to quaternary structure, part of the 30S ribosomal subunit. Forms a tight heterodimer with protein bS6.

Binds as a heterodimer with protein bS6 to the central domain of the 16S rRNA, where it helps stabilize the platform of the 30S subunit. The chain is Small ribosomal subunit protein bS18 from Rhizobium meliloti (strain 1021) (Ensifer meliloti).